A 425-amino-acid polypeptide reads, in one-letter code: Serine--tRNA ligase (425 aa).

230 to 232 (TAE) provides a ligand contact to L-serine. Residue 261-263 (RQE) participates in ATP binding. Glutamate 284 serves as a coordination point for L-serine. Residue 348–351 (EISS) coordinates ATP. Serine 384 serves as a coordination point for L-serine.

The protein belongs to the class-II aminoacyl-tRNA synthetase family. Type-1 seryl-tRNA synthetase subfamily. Homodimer. The tRNA molecule binds across the dimer.

The protein localises to the cytoplasm. It carries out the reaction tRNA(Ser) + L-serine + ATP = L-seryl-tRNA(Ser) + AMP + diphosphate + H(+). The enzyme catalyses tRNA(Sec) + L-serine + ATP = L-seryl-tRNA(Sec) + AMP + diphosphate + H(+). It participates in aminoacyl-tRNA biosynthesis; selenocysteinyl-tRNA(Sec) biosynthesis; L-seryl-tRNA(Sec) from L-serine and tRNA(Sec): step 1/1. Functionally, catalyzes the attachment of serine to tRNA(Ser). Is also able to aminoacylate tRNA(Sec) with serine, to form the misacylated tRNA L-seryl-tRNA(Sec), which will be further converted into selenocysteinyl-tRNA(Sec). In Caldanaerobacter subterraneus subsp. tengcongensis (strain DSM 15242 / JCM 11007 / NBRC 100824 / MB4) (Thermoanaerobacter tengcongensis), this protein is Serine--tRNA ligase.